Here is a 366-residue protein sequence, read N- to C-terminus: Beta sliding clamp (366 aa).

The protein belongs to the beta sliding clamp family. In terms of assembly, forms a ring-shaped head-to-tail homodimer around DNA which binds and tethers DNA polymerases and other proteins to the DNA. The DNA replisome complex has a single clamp-loading complex (3 tau and 1 each of delta, delta', psi and chi subunits) which binds 3 Pol III cores (1 core on the leading strand and 2 on the lagging strand) each with a beta sliding clamp dimer. Additional proteins in the replisome are other copies of gamma, psi and chi, Ssb, DNA helicase and RNA primase.

It localises to the cytoplasm. Confers DNA tethering and processivity to DNA polymerases and other proteins. Acts as a clamp, forming a ring around DNA (a reaction catalyzed by the clamp-loading complex) which diffuses in an ATP-independent manner freely and bidirectionally along dsDNA. Initially characterized for its ability to contact the catalytic subunit of DNA polymerase III (Pol III), a complex, multichain enzyme responsible for most of the replicative synthesis in bacteria; Pol III exhibits 3'-5' exonuclease proofreading activity. The beta chain is required for initiation of replication as well as for processivity of DNA replication. The chain is Beta sliding clamp (dnaN) from Vibrio cholerae serotype O1 (strain ATCC 39315 / El Tor Inaba N16961).